The sequence spans 407 residues: MYTISKARRLGKCFLIIDNMFVVIGFYVVFPLISIYFVEQLGWGAFLVGFALGLRQFIQQGLGIFSGAFADKLGAKPMIVSGLFIRTLGFIIMSVANTPLLLCLSCMLSALGGTLFDPPRTALVIKLVRPWELGRFYSVLMLEDSMCAIIGIVLGTWLLQYNFKLVCFTGAILFFIAGVFNAWRLPAYKISSSHASLLEGIKKVLNNQRFVIYVFTLTGYYILSAQVMLMLPIRIHEVSGQLSYIKWMYIIEAILSLLLIMPITWWSEKYFKLETRLMVGLITMIISLFPIGLVKNLHTLLILISLFYIGSIIAEPARETLGALLTDYKARSSYIGFSKLSLALGGTVGYSGSGWLYDIGKEQNFTQLPWIILSIIGLITLLGLYCQFKYYSFQSLLNNSHNKKRKL.

10 helical membrane-spanning segments follow: residues 13 to 33 (CFLI…FPLI), 88 to 108 (LGFI…SCML), 139 to 159 (VLML…TWLL), 163 to 183 (FKLV…FNAW), 210 to 230 (FVIY…VMLM), 247 to 267 (WMYI…TWWS), 277 to 297 (LMVG…VKNL), 298 to 318 (HTLL…EPAR), 340 to 360 (LSLA…YDIG), and 368 to 388 (LPWI…YCQF).

The protein belongs to the major facilitator superfamily. DHA1 family. MdtH (TC 2.A.1.2.21) subfamily.

It is found in the cell inner membrane. The sequence is that of Multidrug resistance protein MdtH from Blochmanniella pennsylvanica (strain BPEN).